The sequence spans 565 residues: Proline--tRNA ligase (565 aa).

The protein belongs to the class-II aminoacyl-tRNA synthetase family. ProS type 1 subfamily. As to quaternary structure, homodimer.

It is found in the cytoplasm. The catalysed reaction is tRNA(Pro) + L-proline + ATP = L-prolyl-tRNA(Pro) + AMP + diphosphate. Catalyzes the attachment of proline to tRNA(Pro) in a two-step reaction: proline is first activated by ATP to form Pro-AMP and then transferred to the acceptor end of tRNA(Pro). As ProRS can inadvertently accommodate and process non-cognate amino acids such as alanine and cysteine, to avoid such errors it has two additional distinct editing activities against alanine. One activity is designated as 'pretransfer' editing and involves the tRNA(Pro)-independent hydrolysis of activated Ala-AMP. The other activity is designated 'posttransfer' editing and involves deacylation of mischarged Ala-tRNA(Pro). The misacylated Cys-tRNA(Pro) is not edited by ProRS. This chain is Proline--tRNA ligase, found in Campylobacter lari (strain RM2100 / D67 / ATCC BAA-1060).